Reading from the N-terminus, the 126-residue chain is Profilin-2 (126 aa).

Serine 2 is subject to Blocked amino end (Ser). Lysine 104 bears the N6,N6,N6-trimethyllysine mark.

This sequence belongs to the profilin family. As to quaternary structure, occurs in many kinds of cells as a complex with monomeric actin in a 1:1 ratio.

The protein resides in the cytoplasm. It localises to the cytoskeleton. Binds to actin and affects the structure of the cytoskeleton. At high concentrations, profilin prevents the polymerization of actin, whereas it enhances it at low concentrations. By binding to PIP2, it inhibits the formation of IP3 and DG. The protein is Profilin-2 of Acanthamoeba castellanii (Amoeba).